A 20-amino-acid chain; its full sequence is VYINKLTPPCGTMYYACEAV.

In Pleurotus citrinopileatus (Golden oyster mushroom), this protein is Antiviral protein Y3.